The following is a 257-amino-acid chain: Outer dense fiber protein 4 (257 aa).

A disordered region spans residues 1–41 (MDAEYSGNEFPRSEGERDQHQRPGKERKSGEAGWGTGELGQ). Over residues 11–30 (PRSEGERDQHQRPGKERKSG) the composition is skewed to basic and acidic residues. Phosphoserine is present on Ser64. 3 helical membrane-spanning segments follow: residues 80 to 100 (AQVL…VVAF), 152 to 172 (VTFI…FELE), and 179 to 199 (IGWS…CAIL).

In terms of tissue distribution, expressed in testis and sperm; especially localized to sperm tail (at protein level).

The protein localises to the membrane. Component of the outer dense fibers (ODF) of spermatozoa which could be involved in sperm tail structure, sperm movement and general organization of cellular cytoskeleton. The sequence is that of Outer dense fiber protein 4 (ODF4) from Homo sapiens (Human).